A 103-amino-acid polypeptide reads, in one-letter code: Large ribosomal subunit protein bL21 (103 aa).

This sequence belongs to the bacterial ribosomal protein bL21 family. In terms of assembly, part of the 50S ribosomal subunit. Contacts protein L20.

This protein binds to 23S rRNA in the presence of protein L20. This Treponema denticola (strain ATCC 35405 / DSM 14222 / CIP 103919 / JCM 8153 / KCTC 15104) protein is Large ribosomal subunit protein bL21.